The following is a 426-amino-acid chain: Glutamate-1-semialdehyde 2,1-aminomutase (426 aa).

K265 is modified (N6-(pyridoxal phosphate)lysine).

It belongs to the class-III pyridoxal-phosphate-dependent aminotransferase family. HemL subfamily. As to quaternary structure, homodimer. Pyridoxal 5'-phosphate is required as a cofactor.

It localises to the cytoplasm. It carries out the reaction (S)-4-amino-5-oxopentanoate = 5-aminolevulinate. It participates in porphyrin-containing compound metabolism; protoporphyrin-IX biosynthesis; 5-aminolevulinate from L-glutamyl-tRNA(Glu): step 2/2. This is Glutamate-1-semialdehyde 2,1-aminomutase from Escherichia coli (strain K12 / DH10B).